The sequence spans 780 residues: ATP-dependent 6-phosphofructokinase, liver type (780 aa).

Ala-2 bears the N-acetylalanine mark. The N-terminal catalytic PFK domain 1 stretch occupies residues Ala-2 to His-390. Residues Gly-25, Arg-88–Cys-89, and Gly-118–Ser-121 each bind ATP. Residue Asp-119 participates in Mg(2+) binding. Residues Ser-164–Asp-166, Arg-201, Met-208–Arg-210, Glu-264, Arg-292, and His-298–Arg-301 each bind substrate. Asp-166 acts as the Proton acceptor in catalysis. Position 377 is a phosphoserine (Ser-377). Positions Gln-391–Phe-400 are interdomain linker. A C-terminal regulatory PFK domain 2 region spans residues Ser-401–Phe-780. Residues Arg-470, Thr-527 to Asn-531, Arg-565, Met-572 to Gly-574, and Glu-628 contribute to the beta-D-fructose 2,6-bisphosphate site. Ser-529 carries an O-linked (GlcNAc) serine glycan. Phosphotyrosine is present on Tyr-640. Beta-D-fructose 2,6-bisphosphate is bound by residues Arg-654, His-660–Gln-663, and Arg-734. A Phosphoserine modification is found at Ser-775.

The protein belongs to the phosphofructokinase type A (PFKA) family. ATP-dependent PFK group I subfamily. Eukaryotic two domain clade 'E' sub-subfamily. As to quaternary structure, homo- and heterotetramers. Phosphofructokinase (PFK) enzyme functions as a tetramer composed of different combinations of 3 types of subunits, called PFKM (M), PFKL (L) and PFKP (P). The composition of the PFK tetramer differs according to the tissue type it is present in. The kinetic and regulatory properties of the tetrameric enzyme are dependent on the subunit composition, hence can vary across tissues. Mg(2+) serves as cofactor. In terms of processing, glcNAcylation at Ser-529 by OGT decreases enzyme activity, leading to redirect glucose flux through the oxidative pentose phosphate pathway. Glycosylation is stimulated by both hypoxia and glucose deprivation.

It localises to the cytoplasm. It carries out the reaction beta-D-fructose 6-phosphate + ATP = beta-D-fructose 1,6-bisphosphate + ADP + H(+). Its pathway is carbohydrate degradation; glycolysis; D-glyceraldehyde 3-phosphate and glycerone phosphate from D-glucose: step 3/4. Allosterically activated by ADP, AMP, or fructose 2,6-bisphosphate, and allosterically inhibited by ATP or citrate. GlcNAcylation by OGT overcomes allosteric regulation. Its function is as follows. Catalyzes the phosphorylation of D-fructose 6-phosphate to fructose 1,6-bisphosphate by ATP, the first committing step of glycolysis. Negatively regulates the phagocyte oxidative burst in response to bacterial infection by controlling cellular NADPH biosynthesis and NADPH oxidase-derived reactive oxygen species. Upon macrophage activation, drives the metabolic switch toward glycolysis, thus preventing glucose turnover that produces NADPH via pentose phosphate pathway. The polypeptide is ATP-dependent 6-phosphofructokinase, liver type (Pfkl) (Rattus norvegicus (Rat)).